Reading from the N-terminus, the 368-residue chain is Endoglucanase (368 aa).

A signal peptide spans 1–21 (MNVLRSGLVTMLLLAAFSVQA). The active-site Proton donor is Glu55. Asp116 serves as the catalytic Nucleophile.

This sequence belongs to the glycosyl hydrolase 8 (cellulase D) family.

The protein resides in the secreted. It carries out the reaction Endohydrolysis of (1-&gt;4)-beta-D-glucosidic linkages in cellulose, lichenin and cereal beta-D-glucans.. It functions in the pathway glycan metabolism; bacterial cellulose biosynthesis. Functionally, hydrolyzes carboxymethylcellulose. The protein is Endoglucanase (bcsZ) of Escherichia coli O157:H7.